The following is a 510-amino-acid chain: Gelatinase (510 aa).

Positions methionine 1–alanine 30 are cleaved as a signal peptide. A propeptide spanning residues glutamate 31–histidine 192 is cleaved from the precursor. Position 324 (aspartate 324) interacts with Ca(2+). Histidine 328 contributes to the Zn(2+) binding site. Glutamate 329 is an active-site residue. 2 residues coordinate Zn(2+): histidine 332 and glutamate 352. Serine 376 provides a ligand contact to Ca(2+). The Proton donor role is filled by histidine 419.

This sequence belongs to the peptidase M4 family.

Its subcellular location is the secreted. It catalyses the reaction Preferential cleavage: Xaa-|-Leu, Xaa-|-Phe, Xaa-|-Tyr, Xaa-|-Ala.. Inhibited by L-leucine hydroxamate and phosphoramidon. Not inhibited by phenylmethanesulfonyl fluoride. Reversibly inactivated by straight-chain aliphatic alcohols. Its function is as follows. Metalloprotease capable of the hydrolysis of insoluble hydrophobic substrates. Hydrolyzes azocoll and gelatin and, at a lower rate, soluble and insoluble collagens. Does not cleave short synthetic peptides. Preferentially hydrolyzes the 24-Phe-|-Phe-25 bond in the insulin B-chain, followed by the 5-His-|-Leu-6 bond. Inactivates endothelin-1, primarily by cleavage of the 5-Ser-|-Leu-6 and 16-His-|-Leu-17 bonds. Hydrolyzes the alpha chain of C3 to generate a C3b-like protein. Inhibits complement-mediated hemolysis and opsinization of bacteria. Hydrolyzes the insect antimicrobial peptide cecropin. Decreases the length of E.faecalis chains via the activation of autolysin. Degrades polymerized fibrin. This is Gelatinase from Enterococcus faecalis (strain ATCC 700802 / V583).